A 957-amino-acid polypeptide reads, in one-letter code: Glycine dehydrogenase (decarboxylating) (957 aa).

K708 bears the N6-(pyridoxal phosphate)lysine mark.

This sequence belongs to the GcvP family. As to quaternary structure, the glycine cleavage system is composed of four proteins: P, T, L and H. It depends on pyridoxal 5'-phosphate as a cofactor.

It catalyses the reaction N(6)-[(R)-lipoyl]-L-lysyl-[glycine-cleavage complex H protein] + glycine + H(+) = N(6)-[(R)-S(8)-aminomethyldihydrolipoyl]-L-lysyl-[glycine-cleavage complex H protein] + CO2. In terms of biological role, the glycine cleavage system catalyzes the degradation of glycine. The P protein binds the alpha-amino group of glycine through its pyridoxal phosphate cofactor; CO(2) is released and the remaining methylamine moiety is then transferred to the lipoamide cofactor of the H protein. The sequence is that of Glycine dehydrogenase (decarboxylating) from Escherichia coli O1:K1 / APEC.